Reading from the N-terminus, the 62-residue chain is Sperm protamine P1 (62 aa).

Residues 1–62 form a disordered region; it reads MARYRRHSRS…RYSRRGRRRY (62 aa).

Belongs to the protamine P1 family. As to expression, testis.

It is found in the nucleus. Its subcellular location is the chromosome. Its function is as follows. Protamines substitute for histones in the chromatin of sperm during the haploid phase of spermatogenesis. They compact sperm DNA into a highly condensed, stable and inactive complex. The polypeptide is Sperm protamine P1 (PRM1) (Neophascogale lorentzii (Long-clawed marsupial mouse)).